Here is a 257-residue protein sequence, read N- to C-terminus: MSNQVIVTNISPEVTEKQISDFFSFCGKVSNISTEKSGETQTAKIQFERPSATKTALLLQDALLGQNKIQITSEDGGAASTTDQGGAGGDQAARQEDKPRSAIISELLSRGYHLSDVTLEKSIQLDQSYGVSSKFKGILESALSGVRSVNERYHVTEKANEVDNKFAISDKLNRTSSLVSTYFHKALETAAGTSAGQKVQNAYEDGKNQLLGIHNEARRLADAKNQAEGTASPASSTPTAPAEKEPTAPTTESKTTE.

One can recognise an RRM domain in the interval 3–76 (NQVIVTNISP…NKIQITSEDG (74 aa)). The disordered stretch occupies residues 74–99 (EDGGAASTTDQGGAGGDQAARQEDKP). A compositionally biased stretch (low complexity) spans 75-84 (DGGAASTTDQ). Residues Ser-132 and Ser-177 each carry the phosphoserine modification. The interval 217–257 (ARRLADAKNQAEGTASPASSTPTAPAEKEPTAPTTESKTTE) is disordered. Thr-230 is subject to Phosphothreonine. Positions 230–257 (TASPASSTPTAPAEKEPTAPTTESKTTE) are enriched in low complexity. Phosphoserine is present on residues Ser-232 and Ser-235.

The polypeptide is Protein vip1 (vip1) (Schizosaccharomyces pombe (strain 972 / ATCC 24843) (Fission yeast)).